We begin with the raw amino-acid sequence, 611 residues long: tRNA uridine 5-carboxymethylaminomethyl modification enzyme MnmG (611 aa).

Residue 14-19 participates in FAD binding; sequence GAGHAG. Residue 274–288 coordinates NAD(+); sequence GPRYCPSIEDKIVKF.

This sequence belongs to the MnmG family. As to quaternary structure, homodimer. Heterotetramer of two MnmE and two MnmG subunits. FAD serves as cofactor.

It localises to the cytoplasm. In terms of biological role, NAD-binding protein involved in the addition of a carboxymethylaminomethyl (cmnm) group at the wobble position (U34) of certain tRNAs, forming tRNA-cmnm(5)s(2)U34. The polypeptide is tRNA uridine 5-carboxymethylaminomethyl modification enzyme MnmG (Chlamydia abortus (strain DSM 27085 / S26/3) (Chlamydophila abortus)).